A 207-amino-acid polypeptide reads, in one-letter code: dTTP/UTP pyrophosphatase (207 aa).

Catalysis depends on aspartate 79, which acts as the Proton acceptor.

This sequence belongs to the Maf family. YhdE subfamily. It depends on a divalent metal cation as a cofactor.

The protein localises to the cytoplasm. It catalyses the reaction dTTP + H2O = dTMP + diphosphate + H(+). The enzyme catalyses UTP + H2O = UMP + diphosphate + H(+). Functionally, nucleoside triphosphate pyrophosphatase that hydrolyzes dTTP and UTP. May have a dual role in cell division arrest and in preventing the incorporation of modified nucleotides into cellular nucleic acids. In Nitrobacter hamburgensis (strain DSM 10229 / NCIMB 13809 / X14), this protein is dTTP/UTP pyrophosphatase.